An 877-amino-acid polypeptide reads, in one-letter code: Alanine--tRNA ligase (877 aa).

Positions 567, 571, 669, and 673 each coordinate Zn(2+).

This sequence belongs to the class-II aminoacyl-tRNA synthetase family. Zn(2+) is required as a cofactor.

It is found in the cytoplasm. It carries out the reaction tRNA(Ala) + L-alanine + ATP = L-alanyl-tRNA(Ala) + AMP + diphosphate. Its function is as follows. Catalyzes the attachment of alanine to tRNA(Ala) in a two-step reaction: alanine is first activated by ATP to form Ala-AMP and then transferred to the acceptor end of tRNA(Ala). Also edits incorrectly charged Ser-tRNA(Ala) and Gly-tRNA(Ala) via its editing domain. In Rickettsia bellii (strain RML369-C), this protein is Alanine--tRNA ligase.